A 163-amino-acid chain; its full sequence is ATP synthase subunit b 1 (163 aa).

The chain crosses the membrane as a helical span at residues 5–25 (LDATFFAFVGLVLFLALVVYL).

It belongs to the ATPase B chain family. In terms of assembly, F-type ATPases have 2 components, F(1) - the catalytic core - and F(0) - the membrane proton channel. F(1) has five subunits: alpha(3), beta(3), gamma(1), delta(1), epsilon(1). F(0) has three main subunits: a(1), b(2) and c(10-14). The alpha and beta chains form an alternating ring which encloses part of the gamma chain. F(1) is attached to F(0) by a central stalk formed by the gamma and epsilon chains, while a peripheral stalk is formed by the delta and b chains.

It is found in the cell inner membrane. F(1)F(0) ATP synthase produces ATP from ADP in the presence of a proton or sodium gradient. F-type ATPases consist of two structural domains, F(1) containing the extramembraneous catalytic core and F(0) containing the membrane proton channel, linked together by a central stalk and a peripheral stalk. During catalysis, ATP synthesis in the catalytic domain of F(1) is coupled via a rotary mechanism of the central stalk subunits to proton translocation. In terms of biological role, component of the F(0) channel, it forms part of the peripheral stalk, linking F(1) to F(0). This chain is ATP synthase subunit b 1, found in Rhizobium etli (strain CIAT 652).